Here is a 448-residue protein sequence, read N- to C-terminus: Antizyme inhibitor 1 (448 aa).

The protein belongs to the Orn/Lys/Arg decarboxylase class-II family. ODC antizyme inhibitor subfamily. Monomer. Interacts with OAZ1 and OAZ3; this interaction disrupts the interaction between the antizyme and ODC1. In terms of processing, ubiquitinated, leading to its proteasomal degradation; a process that is reduced in presence of antizyme OAZ1.

Its subcellular location is the nucleus. Antizyme inhibitor (AZI) protein that positively regulates ornithine decarboxylase (ODC) activity and polyamine uptake. AZI is an enzymatically inactive ODC homolog that counteracts the negative effect of ODC antizymes (AZs) OAZ1, OAZ2 and OAZ3 on ODC activity by competing with ODC for antizyme-binding. Inhibits antizyme-dependent ODC degradation and releases ODC monomers from their inactive complex with antizymes, leading to formation of the catalytically active ODC homodimer and restoring polyamine production. In Pongo abelii (Sumatran orangutan), this protein is Antizyme inhibitor 1 (AZIN1).